Here is a 273-residue protein sequence, read N- to C-terminus: 2,3,4,5-tetrahydropyridine-2,6-dicarboxylate N-succinyltransferase (273 aa).

Substrate-binding residues include Arg-106 and Asp-143.

The protein belongs to the transferase hexapeptide repeat family. In terms of assembly, homotrimer.

It is found in the cytoplasm. It carries out the reaction (S)-2,3,4,5-tetrahydrodipicolinate + succinyl-CoA + H2O = (S)-2-succinylamino-6-oxoheptanedioate + CoA. The protein operates within amino-acid biosynthesis; L-lysine biosynthesis via DAP pathway; LL-2,6-diaminopimelate from (S)-tetrahydrodipicolinate (succinylase route): step 1/3. The polypeptide is 2,3,4,5-tetrahydropyridine-2,6-dicarboxylate N-succinyltransferase (Wolbachia sp. subsp. Brugia malayi (strain TRS)).